A 368-amino-acid polypeptide reads, in one-letter code: Left-right determination factor 1 (368 aa).

The N-terminal stretch at 1-21 (MPFLWLCWALWALSLVSLREA) is a signal peptide. A propeptide spans 22 to 76 (LTGEQILGSLLQQLQLDQPPVLDKADVEGMVIPSHVRTQYVALLQHSHASRSRGK) (or 135). N-linked (GlcNAc...) asparagine glycosylation is present at N158. Disulfide bonds link C253–C266, C265–C318, C295–C353, and C299–C355.

It belongs to the TGF-beta family. The processing of the protein may also occur at the second R-X-X-R site located at AA 132-135. Processing appears to be regulated in a cell-type specific manner.

Its subcellular location is the secreted. Its function is as follows. Required for left-right axis determination as a regulator of LEFTY2 and NODAL. In Mus musculus (Mouse), this protein is Left-right determination factor 1 (Lefty1).